The sequence spans 265 residues: Zearalenone hydrolase (265 aa).

Zearalenone is bound by residues Gly-35, Ser-105, and Ser-106. Residue Ser-105 is part of the active site. Residue Glu-129 is part of the active site. Trp-185, Tyr-189, and His-243 together coordinate zearalenone. His-243 is a catalytic residue.

The protein belongs to the AB hydrolase superfamily. Hydrolase RutD family. In terms of assembly, homodimer.

The catalysed reaction is zearalenone + H2O = hydrolyzed zearalenone + H(+). In terms of biological role, lactonohydrolase that specifically hydrolyzes zearalenone (ZEN), an oestrogenic mycotoxin produced by numerous Fusarium specie, into a non-toxic alkylresorcinol product. This Cladophialophora bantiana (strain ATCC 10958 / CDC1940 / 8579 / CBS 173.52) (Xylohypha bantiana) protein is Zearalenone hydrolase.